Here is a 204-residue protein sequence, read N- to C-terminus: Dihydroorotase (204 aa).

His34 contributes to the Zn(2+) binding site. Residue Leu79 participates in substrate binding. Residue Asp107 participates in Zn(2+) binding. The active site involves Asp107. 2 residues coordinate substrate: His111 and Ala123.

This sequence belongs to the metallo-dependent hydrolases superfamily. DHOase family. Class II DHOase subfamily. As to quaternary structure, homodimer. Requires Zn(2+) as cofactor.

The catalysed reaction is (S)-dihydroorotate + H2O = N-carbamoyl-L-aspartate + H(+). It functions in the pathway pyrimidine metabolism; UMP biosynthesis via de novo pathway; (S)-dihydroorotate from bicarbonate: step 3/3. Its function is as follows. Catalyzes the reversible cyclization of carbamoyl aspartate to dihydroorotate. The protein is Dihydroorotase of Serratia marcescens.